The sequence spans 216 residues: DNA gyrase subunit B (216 aa).

The region spanning 140–216 is the Toprim domain; it reads SELYLVEGDS…PDKLRYHKII (77 aa).

The protein belongs to the type II topoisomerase GyrB family. In terms of assembly, heterotetramer, composed of two GyrA and two GyrB chains. In the heterotetramer, GyrA contains the active site tyrosine that forms a transient covalent intermediate with DNA, while GyrB binds cofactors and catalyzes ATP hydrolysis.

The protein resides in the cytoplasm. The enzyme catalyses ATP-dependent breakage, passage and rejoining of double-stranded DNA.. Its function is as follows. A type II topoisomerase that negatively supercoils closed circular double-stranded (ds) DNA in an ATP-dependent manner to modulate DNA topology and maintain chromosomes in an underwound state. Negative supercoiling favors strand separation, and DNA replication, transcription, recombination and repair, all of which involve strand separation. Also able to catalyze the interconversion of other topological isomers of dsDNA rings, including catenanes and knotted rings. Type II topoisomerases break and join 2 DNA strands simultaneously in an ATP-dependent manner. The protein is DNA gyrase subunit B (gyrB) of Acinetobacter bereziniae (Acinetobacter genomosp. 10).